We begin with the raw amino-acid sequence, 362 residues long: Heme A synthase (362 aa).

Helical transmembrane passes span 15 to 35, 104 to 124, 129 to 149, 161 to 181, and 200 to 220; these read VRIW…VGGA, VIGI…AIAP, ALWA…WMVA, VRLA…VWTL, and AIAL…VAGL. H264 is a binding site for heme. Transmembrane regions (helical) follow at residues 266 to 285, 293 to 313, and 316 to 336; these read MMAY…ALRA, GALW…LTLL, and VPIG…TLAV. H324 is a binding site for heme.

This sequence belongs to the COX15/CtaA family. Type 2 subfamily. Interacts with CtaB. It depends on heme b as a cofactor.

It is found in the cell membrane. The enzyme catalyses Fe(II)-heme o + 2 A + H2O = Fe(II)-heme a + 2 AH2. It participates in porphyrin-containing compound metabolism; heme A biosynthesis; heme A from heme O: step 1/1. In terms of biological role, catalyzes the conversion of heme O to heme A by two successive hydroxylations of the methyl group at C8. The first hydroxylation forms heme I, the second hydroxylation results in an unstable dihydroxymethyl group, which spontaneously dehydrates, resulting in the formyl group of heme A. This Rhodopseudomonas palustris (strain BisB5) protein is Heme A synthase.